A 480-amino-acid chain; its full sequence is Cysteine--tRNA ligase (480 aa).

Residue Cys-31 coordinates Zn(2+). Residues 33-43 carry the 'HIGH' region motif; that stretch reads PTVYDSSHIGH. The Zn(2+) site is built by Cys-211, His-236, and Glu-240. Residues 269–273 carry the 'KMSKS' region motif; it reads KMSKS. Position 272 (Lys-272) interacts with ATP.

It belongs to the class-I aminoacyl-tRNA synthetase family. The cofactor is Zn(2+).

It carries out the reaction tRNA(Cys) + L-cysteine + ATP = L-cysteinyl-tRNA(Cys) + AMP + diphosphate. In Encephalitozoon cuniculi (strain GB-M1) (Microsporidian parasite), this protein is Cysteine--tRNA ligase.